The primary structure comprises 336 residues: NAC domain-containing protein 100 (336 aa).

Residues L16–K166 form the NAC domain. Residues V113–K172 mediate DNA binding. A disordered region spans residues R313–Y336.

It is found in the nucleus. In terms of biological role, binds to the promoter regions of genes involved in chlorophyll catabolic processes, such as NYC1, SGR1, SGR2 and PAO. The protein is NAC domain-containing protein 100 of Arabidopsis thaliana (Mouse-ear cress).